The primary structure comprises 239 residues: Probable transcriptional regulatory protein Veis_4238 (239 aa).

The disordered stretch occupies residues 1–22 (MAGHSKWANIQHRKGRQDEKRG).

The protein belongs to the TACO1 family.

It localises to the cytoplasm. The polypeptide is Probable transcriptional regulatory protein Veis_4238 (Verminephrobacter eiseniae (strain EF01-2)).